The following is a 761-amino-acid chain: Autophagy-related protein 13 (761 aa).

Composition is skewed to low complexity over residues 1–10, 290–303, and 327–340; these read MLSDFKQQQQ, SSSV…TSLK, and STSP…ISQP. 6 disordered regions span residues 1–25, 277–367, 398–456, 488–507, 544–642, and 691–761; these read MLSD…HDDT, FHKR…SNKS, ISGT…QSDL, DLRL…NMSI, HSSR…SSIS, and YQNV…SRNF. Composition is skewed to polar residues over residues 344 to 367 and 400 to 411; these read PIQN…SNKS and GTSVPRSFSSST. Over residues 429–444 the composition is skewed to low complexity; sequence RFASSFGSRASRRYSS. Residues 445 to 456 show a composition bias toward polar residues; it reads TSIRQQTPQSDL. Residues 566–590 show a composition bias toward low complexity; sequence QQQQQQQQNQQQSQSPHTNTTSSIH. Over residues 600-613 the composition is skewed to basic and acidic residues; it reads RMKDARPRSEDHQQ. The segment covering 614-631 has biased composition (polar residues); sequence TKFSAARRSSNISPTTAV. Residues 632 to 642 show a composition bias toward low complexity; that stretch reads PSSIGTPSSIS. A compositionally biased stretch (acidic residues) spans 695 to 709; it reads FDDDDEDDNDEEEGD. Over residues 710–720 the composition is skewed to basic and acidic residues; the sequence is REGNQLHEGRN. A compositionally biased stretch (polar residues) spans 721–730; the sequence is STESSQNQSK.

Belongs to the ATG13 family. Fungi subfamily. As to quaternary structure, interacts with ATG1 to form the ATG1-ATG13 kinase complex.

It localises to the cytoplasm. The protein resides in the preautophagosomal structure. In terms of biological role, plays a key role in autophagy. Activates the atg1 kinase in a nutritional condition dependent manner through the TOR pathway, leading to autophagy. Also involved in cytoplasm to vacuole transport (Cvt) and more specifically in Cvt vesicle formation. Seems to play a role in the switching machinery regulating the conversion between the Cvt pathway and autophagy. Finally, plays an important role in biofilm formation and resistance to antifungal compounds such as fluconazole, itraconazole, terbinafine and caspofungin. The polypeptide is Autophagy-related protein 13 (Candida albicans (strain SC5314 / ATCC MYA-2876) (Yeast)).